A 499-amino-acid polypeptide reads, in one-letter code: Probable cytochrome P450 cyp-35D1 (499 aa).

C444 serves as a coordination point for heme.

The protein belongs to the cytochrome P450 family. Heme is required as a cofactor. As to expression, expressed in hypodermis, intestine and vulva upon thiabendazole (TBZ) exposure.

In terms of biological role, cytochromes P450 are a group of heme-thiolate monooxygenases. They oxidize a variety of structurally unrelated compounds, including steroids, fatty acids, and xenobiotics. Involved in the oxidative metabolism of thiabendazole (TBZ). Catalyzes the conversion of TBZ to its hydroxylated form. The protein is Probable cytochrome P450 cyp-35D1 of Caenorhabditis elegans.